The following is a 127-amino-acid chain: Holo-[acyl-carrier-protein] synthase (127 aa).

Residues D7 and E56 each coordinate Mg(2+).

Belongs to the P-Pant transferase superfamily. AcpS family. The cofactor is Mg(2+).

Its subcellular location is the cytoplasm. The catalysed reaction is apo-[ACP] + CoA = holo-[ACP] + adenosine 3',5'-bisphosphate + H(+). In terms of biological role, transfers the 4'-phosphopantetheine moiety from coenzyme A to a Ser of acyl-carrier-protein. The protein is Holo-[acyl-carrier-protein] synthase of Onion yellows phytoplasma (strain OY-M).